The primary structure comprises 236 residues: Small ribosomal subunit protein uS2c (236 aa).

This sequence belongs to the universal ribosomal protein uS2 family.

The protein localises to the plastid. It is found in the chloroplast. In Daucus carota (Wild carrot), this protein is Small ribosomal subunit protein uS2c (rps2).